Reading from the N-terminus, the 638-residue chain is Acetolactate synthase 2, chloroplastic (638 aa).

A chloroplast-targeting transit peptide spans 1–39 (MATAATAAAALTGATTATPKSRRRAHHLATRRALAAPIR). A disordered region spans residues 44-67 (SRATPTAPPATPLRPWGPNEPRKG). Position 112 (E112) interacts with thiamine diphosphate. The cysteines at positions 132 and 278 are disulfide-linked. Residues R214, 320 to 341 (HGTV…FGVR), and 363 to 382 (DIDP…ICAD) contribute to the FAD site. Residues 455–535 (QHQMWAAQYY…VKVFVLNNQH (81 aa)) are thiamine pyrophosphate binding. Mg(2+) contacts are provided by D506 and N533.

It belongs to the TPP enzyme family. It depends on Mg(2+) as a cofactor. Requires thiamine diphosphate as cofactor.

It localises to the plastid. It is found in the chloroplast. The catalysed reaction is 2 pyruvate + H(+) = (2S)-2-acetolactate + CO2. The protein operates within amino-acid biosynthesis; L-isoleucine biosynthesis; L-isoleucine from 2-oxobutanoate: step 1/4. It functions in the pathway amino-acid biosynthesis; L-valine biosynthesis; L-valine from pyruvate: step 1/4. This chain is Acetolactate synthase 2, chloroplastic (ALS2), found in Zea mays (Maize).